Here is a 113-residue protein sequence, read N- to C-terminus: Large ribosomal subunit protein P1z (113 aa).

The tract at residues 87–113 (AAAPAKEEKKDEPAEESDGDLGFGLFD) is disordered. Serine 103 carries the post-translational modification Phosphoserine.

This sequence belongs to the eukaryotic ribosomal protein P1/P2 family. In terms of assembly, P1 and P2 exist as dimers at the large ribosomal subunit.

In terms of biological role, plays an important role in the elongation step of protein synthesis. In Arabidopsis thaliana (Mouse-ear cress), this protein is Large ribosomal subunit protein P1z (RPP1B).